Consider the following 331-residue polypeptide: Anthranilate phosphoribosyltransferase (331 aa).

5-phospho-alpha-D-ribose 1-diphosphate is bound by residues Gly78, 81–82 (GD), Thr86, 88–91 (NVST), 106–114 (KHGNYSVSS), and Ser118. An anthranilate-binding site is contributed by Gly78. Ser90 is a Mg(2+) binding site. Asn109 is a binding site for anthranilate. Arg164 serves as a coordination point for anthranilate. Residues Asp222 and Glu223 each contribute to the Mg(2+) site.

This sequence belongs to the anthranilate phosphoribosyltransferase family. Homodimer. Requires Mg(2+) as cofactor.

It catalyses the reaction N-(5-phospho-beta-D-ribosyl)anthranilate + diphosphate = 5-phospho-alpha-D-ribose 1-diphosphate + anthranilate. The protein operates within amino-acid biosynthesis; L-tryptophan biosynthesis; L-tryptophan from chorismate: step 2/5. Catalyzes the transfer of the phosphoribosyl group of 5-phosphorylribose-1-pyrophosphate (PRPP) to anthranilate to yield N-(5'-phosphoribosyl)-anthranilate (PRA). The sequence is that of Anthranilate phosphoribosyltransferase from Haloferax volcanii (strain ATCC 29605 / DSM 3757 / JCM 8879 / NBRC 14742 / NCIMB 2012 / VKM B-1768 / DS2) (Halobacterium volcanii).